The sequence spans 334 residues: WD repeat-containing protein 54 (334 aa).

WD repeat units follow at residues 162–206 (GHQM…TLLT), 208–247 (IPGF…LHVQ), and 250–289 (AHAR…ESGY).

In terms of assembly, homodimer and homotrimer; forms tight forms of dimers and trimers. Interacts with IZUMO1 and IZUMO1R/JUNO. In terms of processing, cross-linked to tightly form both dimers and trimers by TGM2. Cross-linking enhances the activation of EGF receptor-mediated signaling pathway. Cross-linking is inhibited by EGF. Post-translationally, ubiquitinated. EGF increases ubiquitination. As to expression, expressed in epithelial cells (at protein level). Isoform 3 expression is highly increased in colorectal cancer cells.

It is found in the vesicle. The protein localises to the cytoplasm. Its subcellular location is the cell membrane. Plays a role in the adhesion and fusion of the sperm-oocyte membrane through its interactions with IZUMO1 and IZUMO1R/JUNO. When cross-linked to form dimers and trimers, it has a regulatory effect on ERK signaling pathway activity in response to EGF stimulation. Colocalizes with the EGF receptor in WDR54-specific vesicle where it sustains the internalization and controls the degradation of the EGF receptor after EGF stimulation. The polypeptide is WD repeat-containing protein 54 (Homo sapiens (Human)).